The primary structure comprises 331 residues: Probable endo-beta-1,4-glucanase B (331 aa).

A signal peptide spans 1-18 (MKFQSTLLLAAAAGSALA). N-linked (GlcNAc...) asparagine glycans are attached at residues Asn-38 and Asn-100. Glu-160 (proton donor) is an active-site residue. N-linked (GlcNAc...) asparagine glycosylation is present at Asn-211. Glu-266 serves as the catalytic Nucleophile. Asn-288 carries an N-linked (GlcNAc...) asparagine glycan.

It belongs to the glycosyl hydrolase 5 (cellulase A) family.

It localises to the secreted. It carries out the reaction Endohydrolysis of (1-&gt;4)-beta-D-glucosidic linkages in cellulose, lichenin and cereal beta-D-glucans.. Has endoglucanase activity on substrates containing beta-1,4 glycosidic bonds, like in carboxymethylcellulose (CMC), hydroxyethylcellulose (HEC) and beta-glucan. Involved in the degradation of complex natural cellulosic substrates. This is Probable endo-beta-1,4-glucanase B (eglB) from Aspergillus niger (strain ATCC MYA-4892 / CBS 513.88 / FGSC A1513).